A 429-amino-acid chain; its full sequence is Ribosomal RNA small subunit methyltransferase B (429 aa).

S-adenosyl-L-methionine is bound by residues 254 to 260 (CAAPGGK), D277, D303, and D322. C375 (nucleophile) is an active-site residue.

This sequence belongs to the class I-like SAM-binding methyltransferase superfamily. RsmB/NOP family.

It localises to the cytoplasm. It carries out the reaction cytidine(967) in 16S rRNA + S-adenosyl-L-methionine = 5-methylcytidine(967) in 16S rRNA + S-adenosyl-L-homocysteine + H(+). Specifically methylates the cytosine at position 967 (m5C967) of 16S rRNA. This chain is Ribosomal RNA small subunit methyltransferase B, found in Pectobacterium atrosepticum (strain SCRI 1043 / ATCC BAA-672) (Erwinia carotovora subsp. atroseptica).